The chain runs to 605 residues: UvrABC system protein C (605 aa).

The GIY-YIG domain maps to 14 to 92; the sequence is QSCGVYKMIG…IKSLKPSYNI (79 aa). The UVR domain maps to 202–237; that stretch reads KEVQRQLFSTMEKCSREMNYELAAVYRDRLKFLQQI.

The protein belongs to the UvrC family. Interacts with UvrB in an incision complex.

It is found in the cytoplasm. The UvrABC repair system catalyzes the recognition and processing of DNA lesions. UvrC both incises the 5' and 3' sides of the lesion. The N-terminal half is responsible for the 3' incision and the C-terminal half is responsible for the 5' incision. The chain is UvrABC system protein C from Wolbachia pipientis subsp. Culex pipiens (strain wPip).